The primary structure comprises 575 residues: U3 small nucleolar RNA-associated protein 9 (575 aa).

Basic and acidic residues-rich tracts occupy residues 340–355 and 364–375; these read NEKNNADEADQKKLEE and VQHEKKETETKI. The interval 340-375 is disordered; that stretch reads NEKNNADEADQKKLEEKEEEAQPEVQHEKKETETKI. Residues Ser547 and Ser564 each carry the phosphoserine modification.

As to quaternary structure, interacts with snoRNA U3. Interacts with MPP10. Component of the ribosomal small subunit (SSU) processome composed of at least 40 protein subunits and snoRNA U3. In the absence of snoRNA3, forms a complex with other t-UTPs. This complex can associate with pre-18S ribosomal RNAs.

The protein resides in the nucleus. It localises to the nucleolus. Functionally, involved in nucleolar processing of pre-18S ribosomal RNA. Required for optimal pre-ribosomal RNA transcription by RNA polymerase I together with a subset of U3 proteins required for transcription (t-UTPs). This is U3 small nucleolar RNA-associated protein 9 (UTP9) from Saccharomyces cerevisiae (strain ATCC 204508 / S288c) (Baker's yeast).